The following is a 544-amino-acid chain: GMP synthase [glutamine-hydrolyzing] (544 aa).

Residues T12–G210 enclose the Glutamine amidotransferase type-1 domain. Catalysis depends on C88, which acts as the Nucleophile. Residues H184 and E186 contribute to the active site. In terms of domain architecture, GMPS ATP-PPase spans W211–R419. S239–T245 is a binding site for ATP. XMP contacts are provided by R312, D481, K536, and E542.

In terms of assembly, homodimer. Also forms a small population of homotetramers. Requires Mg(2+) as cofactor.

The protein resides in the cytoplasm. It is found in the cytosol. It carries out the reaction XMP + L-glutamine + ATP + H2O = GMP + L-glutamate + AMP + diphosphate + 2 H(+). It functions in the pathway purine metabolism; GMP biosynthesis; GMP from XMP (L-Gln route): step 1/1. Functionally, catalyzes the conversion of xanthine monophosphate (XMP) to GMP in the presence of glutamine and ATP through an adenyl-XMP intermediate. This is GMP synthase [glutamine-hydrolyzing] from Cryptococcus neoformans var. neoformans serotype D (strain JEC21 / ATCC MYA-565) (Filobasidiella neoformans).